The following is a 78-amino-acid chain: Large ribosomal subunit protein bL28 (78 aa).

It belongs to the bacterial ribosomal protein bL28 family.

The polypeptide is Large ribosomal subunit protein bL28 (Aromatoleum aromaticum (strain DSM 19018 / LMG 30748 / EbN1) (Azoarcus sp. (strain EbN1))).